The chain runs to 417 residues: UDP-N-acetylglucosamine 1-carboxyvinyltransferase (417 aa).

Position 22–23 (22–23 (KN)) interacts with phosphoenolpyruvate. UDP-N-acetyl-alpha-D-glucosamine is bound at residue Arg-93. The active-site Proton donor is Cys-117. Position 117 is a 2-(S-cysteinyl)pyruvic acid O-phosphothioketal (Cys-117). Residues 122–126 (RPVDQ), Asp-304, and Ile-326 each bind UDP-N-acetyl-alpha-D-glucosamine.

Belongs to the EPSP synthase family. MurA subfamily.

It is found in the cytoplasm. It catalyses the reaction phosphoenolpyruvate + UDP-N-acetyl-alpha-D-glucosamine = UDP-N-acetyl-3-O-(1-carboxyvinyl)-alpha-D-glucosamine + phosphate. It participates in cell wall biogenesis; peptidoglycan biosynthesis. Its function is as follows. Cell wall formation. Adds enolpyruvyl to UDP-N-acetylglucosamine. The sequence is that of UDP-N-acetylglucosamine 1-carboxyvinyltransferase from Neisseria meningitidis serogroup A / serotype 4A (strain DSM 15465 / Z2491).